We begin with the raw amino-acid sequence, 374 residues long: Diels-Alderase fsa2 (374 aa).

A beta-sandwich motif region spans residues 1 to 216; sequence MSNVTVSAFT…MDRVWSPLSW (216 aa). Positions 216-374 are beta-barrel motif; sequence WPQVMTESYY…VGTGGQCELS (159 aa).

The protein belongs to the Diels-Alderase family.

The catalysed reaction is (5S)-3-[(2E,6R,8E,10E,12E)-2,6-dimethyltetradeca-2,8,10,12-tetraenoyl]-5-(hydroxymethyl)pyrrolidine-2,4-dione = trichosetin. The protein operates within mycotoxin biosynthesis. Its function is as follows. Diels-Alderase; part of the gene cluster that mediates the biosynthesis of the HIV-1 integrase inhibitor equisetin and of fusarisetin A, both trans-fused decalin-containing tetramic acids showing also antimicrobial activity. The PKS module of fsa1 together with the enoylreductase fsa3 catalyze the formation of the polyketide unit which is then conjugated to L-serine by the condensation domain of the fsa1 NRPS module. Activity of the Dieckmann cyclase domain (RED) results in release of the Dieckmann product intermediate. Diels-Alderase fsa2 is involved in endo-selective Diels-Alder cycloaddition to form the decalin ring, leading to the production of N-desmethylequisetin also called trichosetin. Subsequent N-methylation is carried out by fsa4 to give equisetin. The enzymatic gene responsible for the conversion of equisetin to fusarisetin A has not been identified yet and is probably located outside of the fsa cluster. The sequence is that of Diels-Alderase fsa2 from Fusarium sp. (strain FN080326).